The chain runs to 202 residues: dTTP/UTP pyrophosphatase (202 aa).

The active-site Proton acceptor is Asp83.

It belongs to the Maf family. YhdE subfamily. A divalent metal cation serves as cofactor.

It is found in the cytoplasm. It catalyses the reaction dTTP + H2O = dTMP + diphosphate + H(+). The catalysed reaction is UTP + H2O = UMP + diphosphate + H(+). Functionally, nucleoside triphosphate pyrophosphatase that hydrolyzes dTTP and UTP. May have a dual role in cell division arrest and in preventing the incorporation of modified nucleotides into cellular nucleic acids. In Polaromonas sp. (strain JS666 / ATCC BAA-500), this protein is dTTP/UTP pyrophosphatase.